Consider the following 286-residue polypeptide: Aminoglycoside N(3)-acetyltransferase III (286 aa).

This sequence belongs to the antibiotic N-acetyltransferase family.

The enzyme catalyses a 2-deoxystreptamine antibiotic + acetyl-CoA = an N(3)-acetyl-2-deoxystreptamine antibiotic + CoA + H(+). Its function is as follows. Resistance to antibiotics containing the 2-deoxy-streptamine ring including gentamicin, kanamycin, tobramycin, neomycin and apramycin. This is Aminoglycoside N(3)-acetyltransferase III (aacC3) from Salmonella sp.